Reading from the N-terminus, the 481-residue chain is Glutamate--tRNA ligase 1 (481 aa).

Positions 11 to 21 (PSPTGSLHIGG) match the 'HIGH' region motif. A 'KMSKS' region motif is present at residues 244-248 (KLSKR). An ATP-binding site is contributed by Lys-247.

This sequence belongs to the class-I aminoacyl-tRNA synthetase family. Glutamate--tRNA ligase type 1 subfamily. Monomer.

It is found in the cytoplasm. It catalyses the reaction tRNA(Glu) + L-glutamate + ATP = L-glutamyl-tRNA(Glu) + AMP + diphosphate. Functionally, catalyzes the attachment of glutamate to tRNA(Glu) in a two-step reaction: glutamate is first activated by ATP to form Glu-AMP and then transferred to the acceptor end of tRNA(Glu). In Caldanaerobacter subterraneus subsp. tengcongensis (strain DSM 15242 / JCM 11007 / NBRC 100824 / MB4) (Thermoanaerobacter tengcongensis), this protein is Glutamate--tRNA ligase 1.